We begin with the raw amino-acid sequence, 156 residues long: Lipoprotein signal peptidase (156 aa).

Helical transmembrane passes span Ile52–Val72 and Phe85–Phe105. Active-site residues include Asp111 and Asp129. The chain crosses the membrane as a helical span at residues Asn121–Leu141.

It belongs to the peptidase A8 family.

Its subcellular location is the cell membrane. It catalyses the reaction Release of signal peptides from bacterial membrane prolipoproteins. Hydrolyzes -Xaa-Yaa-Zaa-|-(S,diacylglyceryl)Cys-, in which Xaa is hydrophobic (preferably Leu), and Yaa (Ala or Ser) and Zaa (Gly or Ala) have small, neutral side chains.. It functions in the pathway protein modification; lipoprotein biosynthesis (signal peptide cleavage). Functionally, this protein specifically catalyzes the removal of signal peptides from prolipoproteins. The sequence is that of Lipoprotein signal peptidase from Halalkalibacterium halodurans (strain ATCC BAA-125 / DSM 18197 / FERM 7344 / JCM 9153 / C-125) (Bacillus halodurans).